Reading from the N-terminus, the 216-residue chain is [5-(aminomethyl)furan-3-yl]methyl phosphate kinase (216 aa).

ATP is bound by residues 5 to 9 (KIGGS), glycine 39, aspartate 142, 147 to 152 (YDKFPG), and glycine 166.

Belongs to the MfnE family. Homotrimer. The cofactor is Mg(2+).

The enzyme catalyses [5-(aminomethyl)-3-furyl]methyl phosphate + ATP = [5-(aminomethyl)furan-3-yl]methyl diphosphate + ADP. It participates in cofactor biosynthesis; methanofuran biosynthesis. With respect to regulation, inhibited by EDTA. In terms of biological role, catalyzes the formation of 5-(aminomethyl)-3-furanmethanol diphosphate (F1-PP) from 5-(aminomethyl)-3-furanmethanol phosphate (F1-P) and ATP. In vitro, can also act as an adenylate kinase that catalyzes the transfer of a phosphoryl group from ATP to AMP, generating two molecules of ADP. The chain is [5-(aminomethyl)furan-3-yl]methyl phosphate kinase from Methanocaldococcus jannaschii (strain ATCC 43067 / DSM 2661 / JAL-1 / JCM 10045 / NBRC 100440) (Methanococcus jannaschii).